Reading from the N-terminus, the 599-residue chain is Fructan 1-exohydrolase (599 aa).

Residues 1–16 (MAQAWAFLLLPALALA) form the signal peptide. Asp-78 is an active-site residue. Residues Asn-171, Asn-239, and Asn-251 are each glycosylated (N-linked (GlcNAc...) asparagine). A disulfide bridge connects residues Cys-449 and Cys-495.

This sequence belongs to the glycosyl hydrolase 32 family.

The enzyme catalyses Hydrolysis of terminal, non-reducing (2-&gt;1)-linked beta-D-fructofuranose residues in fructans.. Its activity is regulated as follows. Inhibited by sucrose. Functionally, hydrolyzes inulin-type beta-(2,1)-fructans. May play a role as a beta-(2,1)-trimmer during graminan biosynthesis. This Hordeum vulgare (Barley) protein is Fructan 1-exohydrolase.